A 345-amino-acid chain; its full sequence is Flap endonuclease 1 (345 aa).

Residues 1 to 103 are N-domain; the sequence is MGIKQLSKLL…KELEKRKERR (103 aa). Residue D34 coordinates Mg(2+). Residues R47 and R69 each coordinate DNA. 5 residues coordinate Mg(2+): D85, E157, E159, D178, and D180. The segment at 121-252 is I-domain; it reads LMEMYDKRKT…KKALGLIKKH (132 aa). E157 is a DNA binding site. 2 residues coordinate DNA: G230 and D232. D232 is a Mg(2+) binding site. Residues 333–341 form an interaction with PCNA region; it reads TQGRLDCFI.

The protein belongs to the XPG/RAD2 endonuclease family. FEN1 subfamily. Interacts with PCNA. Three molecules of FEN1 bind to one PCNA trimer with each molecule binding to one PCNA monomer. PCNA stimulates the nuclease activity without altering cleavage specificity. Requires Mg(2+) as cofactor. In terms of processing, phosphorylated. Phosphorylation upon DNA damage induces relocalization to the nuclear plasma.

Its subcellular location is the nucleus. It localises to the nucleolus. The protein resides in the nucleoplasm. It is found in the mitochondrion. Functionally, structure-specific nuclease with 5'-flap endonuclease and 5'-3' exonuclease activities involved in DNA replication and repair. During DNA replication, cleaves the 5'-overhanging flap structure that is generated by displacement synthesis when DNA polymerase encounters the 5'-end of a downstream Okazaki fragment. It enters the flap from the 5'-end and then tracks to cleave the flap base, leaving a nick for ligation. Also involved in the long patch base excision repair (LP-BER) pathway, by cleaving within the apurinic/apyrimidinic (AP) site-terminated flap. Acts as a genome stabilization factor that prevents flaps from equilibrating into structures that lead to duplications and deletions. Also possesses 5'-3' exonuclease activity on nicked or gapped double-stranded DNA, and exhibits RNase H activity. Also involved in replication and repair of rDNA and in repairing mitochondrial DNA. The polypeptide is Flap endonuclease 1 (Encephalitozoon cuniculi (strain GB-M1) (Microsporidian parasite)).